We begin with the raw amino-acid sequence, 261 residues long: Ribosome biogenesis protein NSA2 (261 aa).

A compositionally biased stretch (basic and acidic residues) spans 1-40 (MPQNDYIERHIKQHGKRLDHEERKRKREARESHKISERAQ). The disordered stretch occupies residues 1–43 (MPQNDYIERHIKQHGKRLDHEERKRKREARESHKISERAQKLT). 2 consecutive short sequence motifs (nuclear localization signal) follow at residues 15–22 (GKRLDHEE) and 51–58 (AKKRYAEK). The tract at residues 61–87 (MRKKIKAHEQSKVKGSSKPLDTDGDAL) is disordered.

It belongs to the eukaryotic ribosomal protein eS8 family. Ribosome biogenesis protein NSA2 subfamily. Component of the pre-66S ribosomal particle. Interacts with NOP7 and RRP1. Interacts with RSA4 (via WD repeats).

The protein resides in the nucleus. It is found in the nucleolus. In terms of biological role, involved in the biogenesis of the 60S ribosomal subunit. May play a part in the quality control of pre-60S particles. Under normal, rapid growth conditions, high levels of NSA2 would allow the progression of pre-60S particles through the ITS2 processing. The protein is Ribosome biogenesis protein NSA2 (NSA2) of Saccharomyces cerevisiae (strain YJM789) (Baker's yeast).